The primary structure comprises 272 residues: MASEFKKKAFWRAVIAEFLAMILFVFISIGAALGFNFPIEEKANQTVGRSQDIVKVSLAFGISIATMAQSVGHVSGAHLNPAVTLGCLLSCQISILKAVMYIIAQCLGAVVATAILSGITSGLENNSLGLNGLSPGVSAGQGLGVEILVTFQLVLCVVAVTDRRRHDVSGSVPLAIGLSVALGHLIAIDYTGCGMNPARSFGSAVLTKNFTYHWIFWVGPMIGGAAAAIIYDFILAPRTSDLTDRMKVWTNGQVEEYELDGDDNTRVEMKPK.

Over 1-17 (MASEFKKKAFWRAVIAE) the chain is Cytoplasmic. Residues 18–35 (FLAMILFVFISIGAALGF) traverse the membrane as a helical segment. The Extracellular segment spans residues 36-52 (NFPIEEKANQTVGRSQD). N-linked (GlcNAc...) asparagine glycosylation occurs at N44. A helical transmembrane segment spans residues 53–71 (IVKVSLAFGISIATMAQSV). Over 72–97 (GHVSGAHLNPAVTLGCLLSCQISILK) the chain is Cytoplasmic. The NPA 1 signature appears at 80–82 (NPA). The chain crosses the membrane as a helical span at residues 98-119 (AVMYIIAQCLGAVVATAILSGI). At 120-139 (TSGLENNSLGLNGLSPGVSA) the chain is on the extracellular side. N-linked (GlcNAc...) asparagine glycosylation occurs at N125. The helical transmembrane segment at 140 to 160 (GQGLGVEILVTFQLVLCVVAV) threads the bilayer. Over 161-168 (TDRRRHDV) the chain is Cytoplasmic. The chain crosses the membrane as a helical span at residues 169–188 (SGSVPLAIGLSVALGHLIAI). The Extracellular segment spans residues 189 to 214 (DYTGCGMNPARSFGSAVLTKNFTYHW). Residues 196–198 (NPA) carry the NPA 2 motif. N-linked (GlcNAc...) asparagine glycosylation occurs at N209. A helical transmembrane segment spans residues 215-236 (IFWVGPMIGGAAAAIIYDFILA). Residues 237–272 (PRTSDLTDRMKVWTNGQVEEYELDGDDNTRVEMKPK) lie on the Cytoplasmic side of the membrane.

The protein belongs to the MIP/aquaporin (TC 1.A.8) family.

The protein resides in the membrane. Forms a water-specific channel. This Pelophylax lessonae (Pool frog) protein is Aquaporin FA-CHIP (AQPA).